The primary structure comprises 411 residues: Protein translocase subunit SecY (411 aa).

Transmembrane regions (helical) follow at residues 13–33 (FTLLLLVLARLGIFIPVPGID), 52–72 (IFSGGGFSTIGIFALGIVPYI), 111–131 (ALGWATLQSGAISIWVKPYVF), 135–155 (FTFVCESVLALTAGSMIIMWL), 163–180 (GIGNGASLLIFQNIVSGL), 197–217 (SIKFGLFIVIFLLMIIITIFV), 252–272 (GVMPIVFASASMALPAYLTQL), 291–311 (LYLVLYSVLILFFSYFYTSIV), 350–370 (FLGATFLFTVALIPFIIEKVA), and 377–397 (GLGATSLLILVGVAIDTAKQI).

The protein belongs to the SecY/SEC61-alpha family. In terms of assembly, component of the plastid Sec protein translocase complex, which is composed of at least SecY, SecE and SecG.

The protein resides in the plastid. Its subcellular location is the chloroplast thylakoid membrane. Functionally, the central subunit of the protein translocation channel SecYE. Consists of two halves formed by TMs 1-5 and 6-10. These two domains form a lateral gate at the front which open onto the bilayer between TMs 2 and 7, and are clamped together by SecE at the back. The channel is closed by both a pore ring composed of hydrophobic SecY resides and a short helix (helix 2A) on the extracellular side of the membrane which forms a plug. This chain is Protein translocase subunit SecY, found in Porphyra purpurea (Red seaweed).